The chain runs to 219 residues: Deoxyribose-phosphate aldolase (219 aa).

The active-site Proton donor/acceptor is the Asp93. Lys154 serves as the catalytic Schiff-base intermediate with acetaldehyde. Residue Lys179 is the Proton donor/acceptor of the active site.

It belongs to the DeoC/FbaB aldolase family. DeoC type 1 subfamily.

Its subcellular location is the cytoplasm. The enzyme catalyses 2-deoxy-D-ribose 5-phosphate = D-glyceraldehyde 3-phosphate + acetaldehyde. Its pathway is carbohydrate degradation; 2-deoxy-D-ribose 1-phosphate degradation; D-glyceraldehyde 3-phosphate and acetaldehyde from 2-deoxy-alpha-D-ribose 1-phosphate: step 2/2. Functionally, catalyzes a reversible aldol reaction between acetaldehyde and D-glyceraldehyde 3-phosphate to generate 2-deoxy-D-ribose 5-phosphate. The polypeptide is Deoxyribose-phosphate aldolase (Haloquadratum walsbyi (strain DSM 16790 / HBSQ001)).